We begin with the raw amino-acid sequence, 240 residues long: Serine protease SplB (240 aa).

Residues 1–36 form the signal peptide; sequence MNKNVVIKSLAALTILTSVTGIGTTLVEEVQQTAKA. Active-site charge relay system residues include H75, D113, and S193.

Belongs to the peptidase S1B family.

It localises to the secreted. Serine protease that cleaves specifically after the sequence Trp-Glu-Leu-Gln. This is Serine protease SplB (splB) from Staphylococcus aureus (strain USA300).